The sequence spans 406 residues: Probable endo-xylogalacturonan hydrolase A (406 aa).

The N-terminal stretch at 1-18 (MLYPRNLALFSLLSLSSA) is a signal peptide. PbH1 repeat units follow at residues 183 to 213 (TQHVTFKNLRMDATSNSQNPPKNTDGFDIGA), 214 to 235 (STHVTISSVSVTNDDDCVAFKP), 237 to 257 (SNYVTVEDVTCTGSHGISVGS), and 299 to 320 (VKNVTFSDFNVRGCDYAFQIES). The active-site Proton donor is the D228. Residue H251 is part of the active site. An N-linked (GlcNAc...) asparagine glycan is attached at N301.

Belongs to the glycosyl hydrolase 28 family.

Its subcellular location is the secreted. Its function is as follows. Pectinolytic enzyme involved in the degradation of xylogalacturonan (xga), a galacturonan backbone heavily substituted with xylose, and which is one important component of the hairy regions of pectin. Activity requires a galacturonic acid backbone substituted with xylose. This is Probable endo-xylogalacturonan hydrolase A (xghA) from Aspergillus fumigatus (strain ATCC MYA-4609 / CBS 101355 / FGSC A1100 / Af293) (Neosartorya fumigata).